Reading from the N-terminus, the 818-residue chain is MKFTLSWLKQFLETSSTVIEIAEALTAIGLEVEEVIDKAAELQKFEVAYIASTKPHPSADKLKLCDVETKSGMRQIVCGASNARAGIKVVLANIGIEIPNGKFKIKESIIRGEKSCGMLCSEEELLLASESEGIIELYEDAVVGENFTKYYGLDDPIFVINVTPNRGDALGVYGIARDLAAKGIGILKELEIPEIKSTFTSKMKLNVQDKEACPLFTFREIRNLKNKPSPDWLRKLLKNVGVKTISSLVDVTNYISYSFGQPMHAYDADRIKGGISVARHCEKCSDEAISGQQKEIAAAALQPRNDVAKFHALNGKEYLLTENDLAIKDESGIQGLAGVIGGAKSSCTDSTTNIILEAACFNAKMVAASGRRFQIDTDARYRNERNIDRNFTEKALDIATNLILSICGNGEVSEVVKFGEKEPQKKPLDFSAYYLEKITGIKLSIKEIEAILNELGFITDVKGEIIKVIAPSWRHDITILEDIAEEITRIYGYDKIESIKLPELDQDNNKLREYKRISSFKRILASKGYDEVVTNSFMSSEDAKLFAELKEELFLLNPISIGDNYMRPTILPNLLSIVSKNLARSIKDMAFFEVGPSFIDLNTEATYLTAIISGSYNNKNPHSLGRGYDIFDLKGDLELVVDYAGLSIDKCIATNGTALPQYYHPTRAVNIGLGKNLLGHFGQIHPKILKYYDINQEIFAFELNITNLPLIKAKFGKREEFAVSDFQANFRDYAFIVDQDHRVGEIISYINNFNKKLVKSVILFDIYSGDKLPESKKSIAIKIELQADDRTLTEADLNLFSQDLIAAIEQKFQGTLRE.

The tRNA-binding domain occupies 39 to 148 (AAELQKFEVA…EDAVVGENFT (110 aa)). One can recognise a B5 domain in the interval 423 to 498 (PQKKPLDFSA…RIYGYDKIES (76 aa)). Aspartate 476, aspartate 482, glutamate 485, and glutamate 486 together coordinate Mg(2+). The FDX-ACB domain occupies 724–817 (SDFQANFRDY…IEQKFQGTLR (94 aa)).

This sequence belongs to the phenylalanyl-tRNA synthetase beta subunit family. Type 1 subfamily. Tetramer of two alpha and two beta subunits. Mg(2+) is required as a cofactor.

The protein resides in the cytoplasm. It catalyses the reaction tRNA(Phe) + L-phenylalanine + ATP = L-phenylalanyl-tRNA(Phe) + AMP + diphosphate + H(+). The protein is Phenylalanine--tRNA ligase beta subunit of Rickettsia felis (strain ATCC VR-1525 / URRWXCal2) (Rickettsia azadi).